The chain runs to 1022 residues: Antigenic heat-stable 120 kDa protein (1022 aa).

2 disordered regions span residues 1–41 (MSKD…QTTT) and 355–403 (GQSK…PQSQ). Residues 19–34 (EYTEEQKQTLEQEQKE) show a composition bias toward basic and acidic residues. 2 stretches are compositionally biased toward polar residues: residues 355–380 (GQSK…QYKQ) and 387–403 (PTNQ…PQSQ).

It localises to the cytoplasm. The polypeptide is Antigenic heat-stable 120 kDa protein (sca4) (Rickettsia conorii (strain ATCC VR-613 / Malish 7)).